The primary structure comprises 129 residues: Small ribosomal subunit protein uS11 (129 aa).

The protein belongs to the universal ribosomal protein uS11 family. In terms of assembly, part of the 30S ribosomal subunit. Interacts with proteins S7 and S18. Binds to IF-3.

Its function is as follows. Located on the platform of the 30S subunit, it bridges several disparate RNA helices of the 16S rRNA. Forms part of the Shine-Dalgarno cleft in the 70S ribosome. This Rhizobium etli (strain CIAT 652) protein is Small ribosomal subunit protein uS11.